The sequence spans 400 residues: Argininosuccinate synthase (400 aa).

ATP contacts are provided by residues 6–14 (AYSGGLDTS) and A33. L-citrulline-binding residues include Y84 and S89. Position 114 (G114) interacts with ATP. Residues T116, N120, and D121 each coordinate L-aspartate. N120 is a binding site for L-citrulline. L-citrulline is bound by residues R124, S173, S182, E258, and Y270.

This sequence belongs to the argininosuccinate synthase family. Type 1 subfamily. In terms of assembly, homotetramer.

The protein resides in the cytoplasm. It carries out the reaction L-citrulline + L-aspartate + ATP = 2-(N(omega)-L-arginino)succinate + AMP + diphosphate + H(+). Its pathway is amino-acid biosynthesis; L-arginine biosynthesis; L-arginine from L-ornithine and carbamoyl phosphate: step 2/3. The polypeptide is Argininosuccinate synthase (Thermus thermophilus (strain ATCC 27634 / DSM 579 / HB8)).